Consider the following 331-residue polypeptide: Phenylalanine--tRNA ligase alpha subunit (331 aa).

A Mg(2+)-binding site is contributed by Glu-252.

This sequence belongs to the class-II aminoacyl-tRNA synthetase family. Phe-tRNA synthetase alpha subunit type 1 subfamily. In terms of assembly, tetramer of two alpha and two beta subunits. The cofactor is Mg(2+).

Its subcellular location is the cytoplasm. The catalysed reaction is tRNA(Phe) + L-phenylalanine + ATP = L-phenylalanyl-tRNA(Phe) + AMP + diphosphate + H(+). The protein is Phenylalanine--tRNA ligase alpha subunit of Marinomonas sp. (strain MWYL1).